Here is a 110-residue protein sequence, read N- to C-terminus: Single-stranded DNA-binding protein 1 (110 aa).

The SSB domain maps to 1–104 (MNKILLIGRM…VVGEEVQFLE (104 aa)).

In terms of assembly, homotetramer.

In Clostridium acetobutylicum (strain ATCC 824 / DSM 792 / JCM 1419 / IAM 19013 / LMG 5710 / NBRC 13948 / NRRL B-527 / VKM B-1787 / 2291 / W), this protein is Single-stranded DNA-binding protein 1 (ssb1).